A 197-amino-acid polypeptide reads, in one-letter code: Secreted RxLR effector protein 48 (197 aa).

The signal sequence occupies residues 1–27 (MCCVSWNWVLACTFLLIFLSWWNCCND). The RxLR-dEER signature appears at 58–79 (RLLRVNLAANAEVLTHEIEEEK).

It belongs to the RxLR effector family.

The protein resides in the secreted. The protein localises to the host nucleus. Its subcellular location is the host cytoplasm. Secreted effector that completely suppresses the host cell death induced by cell death-inducing proteins. The protein is Secreted RxLR effector protein 48 of Plasmopara viticola (Downy mildew of grapevine).